We begin with the raw amino-acid sequence, 227 residues long: Urease accessory protein UreG (227 aa).

A compositionally biased stretch (basic and acidic residues) spans 1 to 10 (MHLDHAHTHD). Residues 1–22 (MHLDHAHTHDGPSAVSADAHRP) form a disordered region. 35–42 (GPVGSGKT) serves as a coordination point for GTP.

The protein belongs to the SIMIBI class G3E GTPase family. UreG subfamily. As to quaternary structure, homodimer. UreD, UreF and UreG form a complex that acts as a GTP-hydrolysis-dependent molecular chaperone, activating the urease apoprotein by helping to assemble the nickel containing metallocenter of UreC. The UreE protein probably delivers the nickel.

It is found in the cytoplasm. Its function is as follows. Facilitates the functional incorporation of the urease nickel metallocenter. This process requires GTP hydrolysis, probably effectuated by UreG. This is Urease accessory protein UreG from Streptomyces avermitilis (strain ATCC 31267 / DSM 46492 / JCM 5070 / NBRC 14893 / NCIMB 12804 / NRRL 8165 / MA-4680).